Here is a 324-residue protein sequence, read N- to C-terminus: Taste receptor type 2 member 116 (324 aa).

Residues 1–2 are Extracellular-facing; sequence MN. A helical membrane pass occupies residues 3-23; it reads GVLYITFTVILSVEVIIGNFG. Residues 24 to 55 lie on the Cytoplasmic side of the membrane; the sequence is NGIIALVNIMDLAKRRKISSVDQILTALAISR. A helical transmembrane segment spans residues 56 to 76; the sequence is IVLLWLVLVSWWLSMFYPGQW. Over 77–94 the chain is Extracellular; the sequence is MTEGIDVIVHNVWTTLNQ. A helical membrane pass occupies residues 95–115; sequence ISLWLATSFSVFCFLKVANFS. Residues 116–128 lie on the Cytoplasmic side of the membrane; sequence NTIFFYLKIRVKK. Residues 129–149 traverse the membrane as a helical segment; that stretch reads VMTGTLIMFLLLLGLNIIVIN. At 150–183 the chain is on the extracellular side; the sequence is ASKTILIPEYKVNMSNSLNLKNTQISMLFPFANT. Asn-162 carries N-linked (GlcNAc...) asparagine glycosylation. The helical transmembrane segment at 184–204 threads the bilayer; that stretch reads LFGFIPFAVSLVTFLLLFFSL. At 205–236 the chain is on the cytoplasmic side; that stretch reads WKHQRKMHHGAQGCRDSSTKAHIRVLQTLIAS. Residues 237-257 traverse the membrane as a helical segment; sequence ILLYFVFFLSLVVKVWISLFL. Residues 258–261 are Extracellular-facing; it reads ERML. Residues 262-282 traverse the membrane as a helical segment; sequence LLLITQAAKIAFPSLHPWVLI. Residues 283–324 lie on the Cytoplasmic side of the membrane; sequence LGNAKLRKASLSALQWLRCRHKDEHRRVQRPEVHSCGSSCMP.

The protein belongs to the G-protein coupled receptor T2R family.

It is found in the membrane. Its function is as follows. Putative taste receptor which may play a role in the perception of bitterness. The protein is Taste receptor type 2 member 116 of Rattus norvegicus (Rat).